The sequence spans 404 residues: Schlafen-like protein 1 (404 aa).

Disordered regions lie at residues 1 to 31 (MTPM…LPTE) and 139 to 170 (GPLS…AWPT). Residues 7–16 (SVQTQVSEPF) are compositionally biased toward polar residues. The span at 152–165 (GLSPGPNPGSGVPL) shows a compositional bias: low complexity. 258–265 (GVEDSGLV) is a binding site for ATP. The stretch at 365-395 (RWLVELGKLEERVKVLTMEKEQLQQQLQQHG) forms a coiled coil.

Belongs to the Schlafen family. Subgroup I subfamily.

The protein is Schlafen-like protein 1 (SLFNL1) of Macaca fascicularis (Crab-eating macaque).